Here is a 633-residue protein sequence, read N- to C-terminus: Threonine--tRNA ligase (633 aa).

A TGS domain is found at 1-61 (MINVYFSDNS…TEDCKFEVIT (61 aa)). The segment at 242-533 (DHRKIGKELE…LIEHHSGKLP (292 aa)) is catalytic. Zn(2+)-binding residues include C333, H384, and H510.

The protein belongs to the class-II aminoacyl-tRNA synthetase family. In terms of assembly, homodimer. The cofactor is Zn(2+).

It localises to the cytoplasm. The catalysed reaction is tRNA(Thr) + L-threonine + ATP = L-threonyl-tRNA(Thr) + AMP + diphosphate + H(+). Its function is as follows. Catalyzes the attachment of threonine to tRNA(Thr) in a two-step reaction: L-threonine is first activated by ATP to form Thr-AMP and then transferred to the acceptor end of tRNA(Thr). Also edits incorrectly charged L-seryl-tRNA(Thr). This Ehrlichia ruminantium (strain Welgevonden) protein is Threonine--tRNA ligase.